Consider the following 640-residue polypeptide: MFGFKTTKNKKRVRLLVVAIGVMIFFMCLSNFSSIQSRQSSSTDTPLQQNGKHQVIRVLETQPSININNSENNINNENINNNQNNNPNNNMDNNNKNNNKNNNIDNNNNKNNNNNDNIDNNINNNNNNNNNNNNINNNNNINNNNNIDNTDNNINNNINNNNININNNNKPSYKKPEKKPPLSSSQIFFNSLPPHIQKQVVIREKSNYAQALQYDSYGIVPAKDFFDGLDAVFETKPNYKISTVRKLFNIENLNSNNNNNNNNNNNNNNNNNNNNNYDINNYNNINIKEDDKFENKNYQNGDKNIMYSDYKGIDYGNNNNIEEIERIKEELKIELEKENVNDIFKYRVTIVTQTTVDRLYKVAAMAERWRSPISVSLFIKSQGDIDKLEKAISANKILATFADFHLFYHNNTRYPVNNLRNLAIRNALTEHVLLLDVDFIPPSHLHDHIAHYINLNYLNQDDSLNAFVIPSFSSNLQPKDIPDSKFEFIEMLTKNKIEPSNLKVCPKCHSPTDYTRWMTSTEPYAIEYHWIYEPFLVYNRSQTLPFDERFKGYGFDKNSQIFGMAAQGFTFSVLPEAYIVHINHPTSRWDGPSLDDQQWDSLRVVCDLLPEIRKRYAKGYKVDRLFDEPTTENCYSNDHW.

Residues Met-1–Arg-14 are Cytoplasmic-facing. Residues Leu-15 to Ile-35 traverse the membrane as a helical; Signal-anchor for type II membrane protein segment. Residues Gln-36–Trp-640 lie on the Extracellular side of the membrane. Disordered stretches follow at residues Pro-63–Ser-184 and Asn-254–Tyr-277. The span at Ile-65–Pro-171 shows a compositional bias: low complexity. Asn-68 carries N-linked (GlcNAc...) asparagine glycosylation. N-linked (GlcNAc...) asparagine glycans are attached at residues Asn-410 and Asn-539.

Belongs to the glycosyltransferase 8 family. Highly divergent.

The protein localises to the membrane. This is Glycosyltransferase-like protein gnt14 (gnt14) from Dictyostelium discoideum (Social amoeba).